The sequence spans 392 residues: RNA-binding motif protein, X-linked-like-2 (392 aa).

Residues 8–86 (GKLFIGGLNL…KAIKVAQATK (79 aa)) enclose the RRM domain. Basic and acidic residues predominate over residues 67-78 (RDMNGKSLDGKA). Positions 67-392 (RDMNGKSLDG…LERGGGRSRY (326 aa)) are disordered. Positions 150 to 163 (RGPPPRRVGPPPKR) are enriched in pro residues. 2 stretches are compositionally biased toward basic and acidic residues: residues 194–229 (PRREPLPPRRDPYLGPRDEGYSSRDGYSSRDYREPR) and 238–283 (YTHR…REPF). Low complexity predominate over residues 319-331 (YSGGRDSYSSSYG). A compositionally biased stretch (basic and acidic residues) spans 381–392 (GRLERGGGRSRY).

In terms of tissue distribution, expressed predominantly in spermatocytes and less in round spermatids (at protein level). Expressed in germ cells.

Its subcellular location is the nucleus. This chain is RNA-binding motif protein, X-linked-like-2 (RBMXL2), found in Homo sapiens (Human).